The following is a 269-amino-acid chain: Flagellar brake protein YcgR (269 aa).

Positions 1-42 (MLREPMNQHDAPGPAETGADSDAETDAETDAETDAGAADDRY) are disordered. The segment covering 19–33 (ADSDAETDAETDAET) has biased composition (acidic residues). In terms of domain architecture, PilZ spans 149–261 (QRRRHFRART…MENFLQRLVF (113 aa)).

The protein belongs to the YcgR family. In terms of assembly, monomer. Interacts with the flagellar basal bodies.

It localises to the bacterial flagellum basal body. Functionally, acts as a flagellar brake, regulating swimming and swarming in a bis-(3'-5') cyclic diguanylic acid (c-di-GMP)-dependent manner. Binds 1 c-di-GMP dimer per subunit. Increasing levels of c-di-GMP lead to decreased motility. This Cupriavidus taiwanensis (strain DSM 17343 / BCRC 17206 / CCUG 44338 / CIP 107171 / LMG 19424 / R1) (Ralstonia taiwanensis (strain LMG 19424)) protein is Flagellar brake protein YcgR.